Here is a 310-residue protein sequence, read N- to C-terminus: Acetylglutamate kinase (310 aa).

Substrate-binding positions include 74 to 75, arginine 96, and asparagine 201; that span reads GG.

It belongs to the acetylglutamate kinase family. ArgB subfamily.

It is found in the cytoplasm. The catalysed reaction is N-acetyl-L-glutamate + ATP = N-acetyl-L-glutamyl 5-phosphate + ADP. The protein operates within amino-acid biosynthesis; L-arginine biosynthesis; N(2)-acetyl-L-ornithine from L-glutamate: step 2/4. Its function is as follows. Catalyzes the ATP-dependent phosphorylation of N-acetyl-L-glutamate. This is Acetylglutamate kinase from Arthrobacter sp. (strain FB24).